A 405-amino-acid polypeptide reads, in one-letter code: 11-beta-hydroxysteroid dehydrogenase type 2 (405 aa).

82–111 lines the NAD(+) pocket; sequence TRAVLITGCDSGFGKETAKKLDSMGFTVLA. S219 is a substrate binding site. Residue Y232 is the Proton acceptor of the active site. Positions 335 to 339 are essential for protein stability; it reads RRRYY. A compositionally biased stretch (low complexity) spans 377-387; it reads QPGQPGTTPPQ. Positions 377–405 are disordered; the sequence is QPGQPGTTPPQDAAQDPNLSPGPSPAVAR. Over residues 396–405 the composition is skewed to pro residues; the sequence is SPGPSPAVAR.

It belongs to the short-chain dehydrogenases/reductases (SDR) family. In terms of assembly, interacts with ligand-free cytoplasmic NR3C2. Expressed in kidney, placenta, pancreas, prostate, ovary, small intestine and colon, and in lower levels in the spleen and testis. At midgestation, expressed at high levels in placenta and in fetal kidney and, at much lower levels, in fetal lung and testis.

Its subcellular location is the microsome. The protein localises to the endoplasmic reticulum. The catalysed reaction is an 11beta-hydroxysteroid + NAD(+) = an 11-oxosteroid + NADH + H(+). It carries out the reaction cortisol + NAD(+) = cortisone + NADH + H(+). The enzyme catalyses corticosterone + NAD(+) = 11-dehydrocorticosterone + NADH + H(+). It catalyses the reaction 11beta,17beta-dihydroxyandrost-4-ene-3-one + NAD(+) = 17beta-hydroxyandrost-4-ene-3,11-dione + NADH + H(+). The catalysed reaction is 11beta-hydroxyandrost-4-ene-3,17-dione + NAD(+) = androst-4-ene-3,11,17-trione + NADH + H(+). It functions in the pathway steroid metabolism. Inhibited by glycyrrhetinic acid (derived from liquorice). Functionally, catalyzes the conversion of biologically active 11beta-hydroxyglucocorticoids (11beta-hydroxysteroid) such as cortisol, to inactive 11-ketoglucocorticoids (11-oxosteroid) such as cortisone, in the presence of NAD(+). Functions as a dehydrogenase (oxidase), thereby decreasing the concentration of active glucocorticoids, thus protecting the nonselective mineralocorticoid receptor from occupation by glucocorticoids. Plays an important role in maintaining glucocorticoids balance during preimplantation and protects the fetus from excessive maternal corticosterone exposure. Catalyzes the oxidation of 11beta-hydroxytestosterone (11beta,17beta-dihydroxyandrost-4-ene-3-one) to 11-ketotestosterone (17beta-hydroxyandrost-4-ene-3,11-dione), a major bioactive androgen. Catalyzes the conversion of 11beta-hydroxyandrostenedione (11beta-hydroxyandrost-4-ene-3,17-dione) to 11-ketoandrostenedione (androst-4-ene-3,11,17-trione), which can be further metabolized to 11-ketotestosterone. Converts 7-beta-25-dihydroxycholesterol to 7-oxo-25-hydroxycholesterol in vitro. 7-beta-25-dihydroxycholesterol (not 7-oxo-25-hydroxycholesterol) acts as a ligand for the G-protein-coupled receptor (GPCR) Epstein-Barr virus-induced gene 2 (EBI2) and may thereby regulate immune cell migration. May protect ovulating oocytes and fertilizing spermatozoa from the adverse effects of cortisol. The sequence is that of 11-beta-hydroxysteroid dehydrogenase type 2 from Homo sapiens (Human).